Consider the following 360-residue polypeptide: Phospho-N-acetylmuramoyl-pentapeptide-transferase (360 aa).

10 consecutive transmembrane segments (helical) span residues 21 to 41, 73 to 93, 94 to 114, 132 to 152, 168 to 188, 199 to 219, 239 to 259, 263 to 283, 288 to 308, and 338 to 358; these read YLSF…LWMG, TMGG…WADL, SNPY…VGFV, WKYF…YAHG, VMPQ…VGTS, GLAI…AWAT, LVVV…FNTY, VFMG…IAVL, LVLV…ILQV, and VIVR…ATLK.

It belongs to the glycosyltransferase 4 family. MraY subfamily. It depends on Mg(2+) as a cofactor.

It is found in the cell inner membrane. It catalyses the reaction UDP-N-acetyl-alpha-D-muramoyl-L-alanyl-gamma-D-glutamyl-meso-2,6-diaminopimeloyl-D-alanyl-D-alanine + di-trans,octa-cis-undecaprenyl phosphate = di-trans,octa-cis-undecaprenyl diphospho-N-acetyl-alpha-D-muramoyl-L-alanyl-D-glutamyl-meso-2,6-diaminopimeloyl-D-alanyl-D-alanine + UMP. Its pathway is cell wall biogenesis; peptidoglycan biosynthesis. Functionally, catalyzes the initial step of the lipid cycle reactions in the biosynthesis of the cell wall peptidoglycan: transfers peptidoglycan precursor phospho-MurNAc-pentapeptide from UDP-MurNAc-pentapeptide onto the lipid carrier undecaprenyl phosphate, yielding undecaprenyl-pyrophosphoryl-MurNAc-pentapeptide, known as lipid I. This is Phospho-N-acetylmuramoyl-pentapeptide-transferase from Vibrio atlanticus (strain LGP32) (Vibrio splendidus (strain Mel32)).